Reading from the N-terminus, the 441-residue chain is Diuretic hormone receptor (441 aa).

N99, N107, and N112 each carry an N-linked (GlcNAc...) asparagine glycan. The helical transmembrane segment at 135–158 threads the bilayer; that stretch reads FVFFVGFCLSLVAIAVAIWIFLYF. Residues 159–166 lie on the Cytoplasmic side of the membrane; sequence KDLRCLRN. A helical membrane pass occupies residues 167 to 187; it reads TIHTNLMATYICNDATWIISA. Over 188 to 194 the chain is Extracellular; the sequence is VVQEYVE. A helical membrane pass occupies residues 195–224; the sequence is NGGLCSVLAVLMHYFYLTNFFWMFVEGLYL. Residues 225–238 lie on the Cytoplasmic side of the membrane; it reads FLLVVATFTGEKVK. A helical transmembrane segment spans residues 239–260; sequence LQIYIIIGWGIPGVIVVTWAII. At 261–291 the chain is on the extracellular side; it reads KHLGKTAPDNAGESHPMVLLIKHCPWMAEDY. A helical membrane pass occupies residues 292–315; sequence FDWIHQAPVITVLAVNLVFLFSIM. Topologically, residues 316 to 338 are cytoplasmic; that stretch reads WVLITKLQSANTAETQQYRKATK. Residues 339–357 traverse the membrane as a helical segment; it reads ALLVLFPLLGITYILMMQG. Over 358 to 371 the chain is Extracellular; it reads PMDGVAGHVFRNAQ. Residues 372–391 form a helical membrane-spanning segment; that stretch reads ALLLSLQGFTVALFYCFLNT. At 392–441 the chain is on the cytoplasmic side; it reads EVQNTLRHRMSRWRETRTVGGGRRYTLSGHSKDWSPRSRTESIRCLQHRS.

The protein belongs to the G-protein coupled receptor 2 family. Expressed in Malpighian tubules.

Its subcellular location is the cell membrane. Receptor for the insect diurectic hormone. The activity of this receptor is mediated by G proteins which activate adenylyl cyclase. The chain is Diuretic hormone receptor from Acheta domesticus (House cricket).